An 869-amino-acid chain; its full sequence is DNA mismatch repair protein MutS (869 aa).

602–609 (GPNMSGKS) lines the ATP pocket.

It belongs to the DNA mismatch repair MutS family.

Its function is as follows. This protein is involved in the repair of mismatches in DNA. It is possible that it carries out the mismatch recognition step. This protein has a weak ATPase activity. This Bacillus licheniformis (strain ATCC 14580 / DSM 13 / JCM 2505 / CCUG 7422 / NBRC 12200 / NCIMB 9375 / NCTC 10341 / NRRL NRS-1264 / Gibson 46) protein is DNA mismatch repair protein MutS.